The sequence spans 335 residues: PA-phosphatase related-family protein DDB_G0275547 (335 aa).

Transmembrane regions (helical) follow at residues 43-63 (VMYL…GILF), 93-113 (VLIP…SLIV), 124-144 (ILGL…FKCF), 202-222 (SITA…FKIF), 226-246 (GHIF…LIGI), and 254-274 (HTFL…LSCY).

The protein belongs to the PA-phosphatase related phosphoesterase family.

Its subcellular location is the membrane. This Dictyostelium discoideum (Social amoeba) protein is PA-phosphatase related-family protein DDB_G0275547.